The chain runs to 358 residues: Membrane-bound lytic murein transglycosylase C (358 aa).

The signal sequence occupies residues 1–16 (MKKILALLVIAPLLVS). A lipid anchor (N-palmitoyl cysteine) is attached at cysteine 17. Cysteine 17 carries the S-diacylglycerol cysteine lipid modification.

The protein belongs to the transglycosylase Slt family.

Its subcellular location is the cell outer membrane. The catalysed reaction is Exolytic cleavage of the (1-&gt;4)-beta-glycosidic linkage between N-acetylmuramic acid (MurNAc) and N-acetylglucosamine (GlcNAc) residues in peptidoglycan, from either the reducing or the non-reducing ends of the peptidoglycan chains, with concomitant formation of a 1,6-anhydrobond in the MurNAc residue.. Murein-degrading enzyme. May play a role in recycling of muropeptides during cell elongation and/or cell division. This chain is Membrane-bound lytic murein transglycosylase C, found in Yersinia enterocolitica serotype O:8 / biotype 1B (strain NCTC 13174 / 8081).